A 421-amino-acid chain; its full sequence is Tyrosine--tRNA ligase (421 aa).

Residue tyrosine 36 participates in L-tyrosine binding. The 'HIGH' region signature appears at 41–50 (PTADSLHIGH). 2 residues coordinate L-tyrosine: tyrosine 170 and glutamine 174. The 'KMSKS' region motif lies at 231–235 (KFGKS). Lysine 234 serves as a coordination point for ATP. One can recognise an S4 RNA-binding domain in the interval 353 to 420 (TNIVEALIET…KKKYFMVNYQ (68 aa)).

It belongs to the class-I aminoacyl-tRNA synthetase family. TyrS type 1 subfamily. As to quaternary structure, homodimer.

It is found in the cytoplasm. It catalyses the reaction tRNA(Tyr) + L-tyrosine + ATP = L-tyrosyl-tRNA(Tyr) + AMP + diphosphate + H(+). Catalyzes the attachment of tyrosine to tRNA(Tyr) in a two-step reaction: tyrosine is first activated by ATP to form Tyr-AMP and then transferred to the acceptor end of tRNA(Tyr). This Staphylococcus epidermidis (strain ATCC 35984 / DSM 28319 / BCRC 17069 / CCUG 31568 / BM 3577 / RP62A) protein is Tyrosine--tRNA ligase.